A 372-amino-acid polypeptide reads, in one-letter code: MTAEIQQPPSQPPAQSSPMSAATDKHGGQPSAMESASCATKTKKTNAGIRRPEKPPYSYIALIVMAIQSSPTKRLTLSEIYQFLQSRFPFFRGSYQGWKNSVRHNLSLNECFIKLPKGLGRPGKGHYWTIDPASEFMFEEGSFRRRPRGFRRKCQALKPMYSMMNGLGFNHIPDTYSFQGASGTISCPPNSLSLDSGIGMMNGHLPSNVDGMGLSGHSVSHLTANGAHSYMGSCTGASGGDYSHHDSGSPLLGGGVMDPHSVYSSPASAWAPSASTPYIKQQPLSPCNTAANPLSSSLSSHSLDQSYLHQNSHNTASELQGIPRYHSQSPSMNDRKEFVFSFNAMASSSMHSGSGSYYHQQVGYQDIKPCVM.

A disordered region spans residues 1 to 51 (MTAEIQQPPSQPPAQSSPMSAATDKHGGQPSAMESASCATKTKKTNAGIRR). Low complexity predominate over residues 13 to 22 (PAQSSPMSAA). Residues 54–148 (KPPYSYIALI…EEGSFRRRPR (95 aa)) constitute a DNA-binding region (fork-head).

At the late gastrula stage, expressed in the presumptive ventrolateral mesoderm. During neurulation and tailbud stages, expressed in the lateral plate mesoderm and in the neural crest-derived structures of the head and branchial arches. During tailbud stages, expressed in the pronephros and pronephros ducts and in cells that migrate from the dorsolateral plate to the ventral region of the embryo (with the notable exception of the heart). These cells may represent hematopoietic or endothelial progenitor cells.

The protein resides in the nucleus. Probable transcription factor. Required for smooth muscle (visceral mesoderm) differentiation during gut development. Also required for normal proliferation of the lateral plate mesoderm. Acts as a downstream mediator of bmp4-signaling. The protein is Forkhead box protein F1-B (foxf1-b) of Xenopus laevis (African clawed frog).